A 127-amino-acid polypeptide reads, in one-letter code: MRHQKSGRKFNRTSAHREAMFRNMAASLFKHELIKTTLPKAKELRRVAEPLITIGKVDGVANRRLAFARLRDKEAVGKLFVELGPRYATRPGGYLRILKAGFRAGDNAPMAYVELVDRPVVAEEVAE.

The protein belongs to the bacterial ribosomal protein bL17 family. Part of the 50S ribosomal subunit. Contacts protein L32.

The chain is Large ribosomal subunit protein bL17 from Xanthomonas axonopodis pv. citri (strain 306).